A 475-amino-acid polypeptide reads, in one-letter code: MHGGVGHTDEGKLWGARFAGGPSPELAALSASTHFDWALAAYDLAGSRAHAAALAACGYLTDDELAGMLAALDRLDEDVASGAFAAAETDEDVHGALERGLIERAGADLGGKLRAGRSRNDQIATLVRLYLRDHAGVIAERLIALVDAIAAQAEAHPTTILPGRTHLQHAQPVLLAHHLLAHCWPLVRDLERLADWDKRANVSPYGGGALAGSTLGLDPLLVARELGFAASSENSIDGTAARDVVAEFVFIAAQIGVDLSRFAEEIILWNTREFGFVTLDDSYSTGSSIMPQKKNPDIAELARGKSGRLIGNLTGLLTTLKGLPLAYNRDLQEDKEPVFDSVQTLEVVLPAFAGMVATLRFHTDRMAELAPQGFSLATDVAEWLVKRHVPFRVAHELTGSLVRFAEENGLELHEVSDGQFAAISPLLTPDVRTVLTVEGSVASRAGAGGTAPERVAEQLAALTGRVRSLAARREL.

It belongs to the lyase 1 family. Argininosuccinate lyase subfamily.

Its subcellular location is the cytoplasm. It carries out the reaction 2-(N(omega)-L-arginino)succinate = fumarate + L-arginine. It functions in the pathway amino-acid biosynthesis; L-arginine biosynthesis; L-arginine from L-ornithine and carbamoyl phosphate: step 3/3. The chain is Argininosuccinate lyase from Leifsonia xyli subsp. xyli (strain CTCB07).